A 675-amino-acid chain; its full sequence is DNA ligase (675 aa).

NAD(+)-binding positions include 33–37 (DAEYD), 82–83 (SL), and glutamate 114. The N6-AMP-lysine intermediate role is filled by lysine 116. Positions 137, 174, 291, and 315 each coordinate NAD(+). Zn(2+) is bound by residues cysteine 409, cysteine 412, cysteine 427, and cysteine 433. The 81-residue stretch at 595–675 (AGDNPFAGKT…EMIRLLDQSK (81 aa)) folds into the BRCT domain.

The protein belongs to the NAD-dependent DNA ligase family. LigA subfamily. It depends on Mg(2+) as a cofactor. The cofactor is Mn(2+).

It carries out the reaction NAD(+) + (deoxyribonucleotide)n-3'-hydroxyl + 5'-phospho-(deoxyribonucleotide)m = (deoxyribonucleotide)n+m + AMP + beta-nicotinamide D-nucleotide.. Functionally, DNA ligase that catalyzes the formation of phosphodiester linkages between 5'-phosphoryl and 3'-hydroxyl groups in double-stranded DNA using NAD as a coenzyme and as the energy source for the reaction. It is essential for DNA replication and repair of damaged DNA. The polypeptide is DNA ligase (Proteus mirabilis (strain HI4320)).